The primary structure comprises 141 residues: Ribonuclease VapC16 (141 aa).

Asp-99 lines the Mg(2+) pocket. The segment at Asp-99 to Leu-141 is disordered.

This sequence belongs to the PINc/VapC protein family. It depends on Mg(2+) as a cofactor.

In terms of biological role, toxic component of a type II toxin-antitoxin (TA) system. An RNase. The cognate antitoxin is VapB16. The polypeptide is Ribonuclease VapC16 (Mycobacterium tuberculosis (strain ATCC 25618 / H37Rv)).